The chain runs to 877 residues: Alanine--tRNA ligase (877 aa).

Zn(2+)-binding residues include histidine 567, histidine 571, cysteine 669, and histidine 673.

This sequence belongs to the class-II aminoacyl-tRNA synthetase family. Zn(2+) is required as a cofactor.

It localises to the cytoplasm. The catalysed reaction is tRNA(Ala) + L-alanine + ATP = L-alanyl-tRNA(Ala) + AMP + diphosphate. Catalyzes the attachment of alanine to tRNA(Ala) in a two-step reaction: alanine is first activated by ATP to form Ala-AMP and then transferred to the acceptor end of tRNA(Ala). Also edits incorrectly charged Ser-tRNA(Ala) and Gly-tRNA(Ala) via its editing domain. The protein is Alanine--tRNA ligase of Rickettsia bellii (strain RML369-C).